Reading from the N-terminus, the 30-residue chain is Trypsin inhibitor 1 (30 aa).

3 disulfides stabilise this stretch: Cys-4–Cys-21, Cys-11–Cys-23, and Cys-17–Cys-29.

It belongs to the protease inhibitor I7 (squash-type serine protease inhibitor) family.

The protein resides in the secreted. Functionally, inhibits trypsin. The polypeptide is Trypsin inhibitor 1 (Momordica charantia (Bitter gourd)).